A 256-amino-acid polypeptide reads, in one-letter code: Nuclear shuttle protein (256 aa).

A Bipartite nuclear localization signal motif is present at residues Y21–S42. Positions Q81–L96 match the Nuclear localization signal motif. The tract at residues E150–D187 is interaction with Arabidopsis thaliana NSI protein.

Belongs to the begomovirus nuclear shuttle protein family. Binds to single-stranded and double-stranded viral DNA. Interacts with the host nuclear shuttle interacting (NSI) protein. This interaction may allow NSP to recruit NSI monomers to the viral genome and thus regulate nuclear export of viral genome by NSP.

It localises to the host nucleus. The protein resides in the host cytoplasm. It is found in the host cell membrane. Functionally, binds to the genomic viral ssDNA, shuttles it into and out of the cell nucleus. Begomoviruses use 2 proteins to transport their DNA from cell to cell. The nuclear shuttle protein (NSP) shuttles it between nucleus and cytoplasm and the movement protein (MP) probably transports the DNA-NSP complex to the cell periphery and facilitates movement across the cell wall. The sequence is that of Nuclear shuttle protein from Macroptilium lathyroides (Lima bean).